The chain runs to 269 residues: Ethylene-responsive transcription factor ERN1 (269 aa).

The segment covering 1 to 15 (MEIQFQQPNLQQHQK) has biased composition (polar residues). Disordered regions lie at residues 1-36 (MEIQFQQPNLQQHQKAGTKGGKFKGRNRNSNTNKFV) and 128-157 (DVPAPSASTTSTSSNTSNSDKNDHNSLSSG). The segment at residues 34–91 (KFVGVRQRPSGRWVAEIKDTTQKIRMWLGTFETAEEAARAYDEAACLLRGSNTRTNFI) is a DNA-binding region (AP2/ERF). Residues 128 to 146 (DVPAPSASTTSTSSNTSNS) show a composition bias toward low complexity.

This sequence belongs to the AP2/ERF transcription factor family. ERF subfamily.

It is found in the nucleus. Its function is as follows. Transcription factor involved in the symbiotic nodule signaling pathway in response to rhizobial stimulation. Functions as a transcriptional regulator required for root infection by symbiotic rhizobia, infection thread (IT) formation, and nodule development. May coordinate these processes. Functions downstream of the CCAMK-CYCLOPS complex. Probably not involved in arbuscular mycorrhizal (AM) symbiosis. The polypeptide is Ethylene-responsive transcription factor ERN1 (Lotus japonicus (Lotus corniculatus var. japonicus)).